The sequence spans 474 residues: Nitrogenase vanadium-iron protein alpha chain (474 aa).

[8Fe-7S] cluster is bound by residues Cys49, Cys75, and Cys138. Residues Cys257 and His423 each contribute to the [7Fe-V-9S-C-homocitryl] cluster site.

It belongs to the NifD/NifK/NifE/NifN family. As to quaternary structure, hexamer of two alpha, two beta, and two delta chains. [8Fe-7S] cluster serves as cofactor. Requires [7Fe-V-9S-C-homocitryl] cluster as cofactor.

It catalyses the reaction N2 + 8 reduced [2Fe-2S]-[ferredoxin] + 16 ATP + 16 H2O = H2 + 8 oxidized [2Fe-2S]-[ferredoxin] + 2 NH4(+) + 16 ADP + 16 phosphate + 6 H(+). Functionally, this vanadium-iron protein is part of the nitrogenase complex that catalyzes the key enzymatic reactions in nitrogen fixation. In Azotobacter vinelandii, this protein is Nitrogenase vanadium-iron protein alpha chain (vnfD).